The primary structure comprises 78 residues: Delta-conotoxin-like TxMKLT1-0111 (78 aa).

The N-terminal stretch at 1–22 is a signal peptide; that stretch reads MKLTCMMIVAVLFLTAWTFATA. A propeptide spanning residues 23–49 is cleaved from the precursor; sequence DDSGNGLENLFSNAHHQMKNPEASKLN. 3 disulfide bridges follow: cysteine 53-cysteine 68, cysteine 60-cysteine 72, and cysteine 67-cysteine 77.

This sequence belongs to the conotoxin O1 superfamily. As to expression, expressed by the venom duct.

It is found in the secreted. Delta-conotoxins bind to site 6 of voltage-gated sodium channels (Nav) and inhibit the inactivation process. In Conus textile (Cloth-of-gold cone), this protein is Delta-conotoxin-like TxMKLT1-0111.